The primary structure comprises 617 residues: DNA double-strand break repair protein Mre11 (617 aa).

The Mn(2+) site is built by Asp-12, His-14, Asp-53, and Asn-88. His-89 functions as the Proton donor in the catalytic mechanism. The Mn(2+) site is built by His-158, Asp-189, and His-191. Residues 395-432 (SPVDPSSSVSSIESSGSVSPIDSVSTVSPSSPSSSAII) show a composition bias toward low complexity. Disordered stretches follow at residues 395–437 (SPVD…EPEE) and 513–617 (VEDE…GDYL). The segment covering 529–547 (APQSSSPVSFSDNSQTGFS) has biased composition (polar residues). The segment covering 549–559 (ISPPESIPSPE) has biased composition (low complexity). Residues 560–583 (ILKENSEADADEKPVDGKLSEEKP) show a composition bias toward basic and acidic residues.

It belongs to the MRE11/RAD32 family. Homodimer. Forms a heterotetramer composed of two Mre11 subunits and two Rad50 subunits. It depends on Mn(2+) as a cofactor.

Its activity is regulated as follows. Nuclease activity is regulated by Rad50. Functionally, part of the Rad50/Mre11 complex, which is involved in the early steps of DNA double-strand break (DSB) repair. The complex may facilitate opening of the processed DNA ends to aid in the recruitment of HerA and NurA. Mre11 binds to DSB ends and has both double-stranded 3'-5' exonuclease activity and single-stranded endonuclease activity. This chain is DNA double-strand break repair protein Mre11, found in Methanosarcina mazei (strain ATCC BAA-159 / DSM 3647 / Goe1 / Go1 / JCM 11833 / OCM 88) (Methanosarcina frisia).